Here is a 185-residue protein sequence, read N- to C-terminus: Pyruvate/ketoisovalerate oxidoreductases common subunit gamma (185 aa).

Heterotetramer of one alpha, one beta, one delta and one gamma chain.

The catalysed reaction is 2 oxidized [2Fe-2S]-[ferredoxin] + pyruvate + CoA = 2 reduced [2Fe-2S]-[ferredoxin] + acetyl-CoA + CO2 + H(+). It carries out the reaction 3-methyl-2-oxobutanoate + 2 oxidized [2Fe-2S]-[ferredoxin] + CoA = 2-methylpropanoyl-CoA + 2 reduced [2Fe-2S]-[ferredoxin] + CO2 + H(+). This chain is Pyruvate/ketoisovalerate oxidoreductases common subunit gamma (porG), found in Pyrococcus abyssi (strain GE5 / Orsay).